We begin with the raw amino-acid sequence, 337 residues long: Ketol-acid reductoisomerase (NADP(+)) (337 aa).

The 181-residue stretch at 3–183 (IDVFYDDDAD…GGGRAGVIPT (181 aa)) folds into the KARI N-terminal Rossmann domain. NADP(+) is bound by residues 26-29 (YGSQ), Arg49, Ser52, Ser54, and 84-87 (DTSQ). Residue His109 is part of the active site. Gly135 contacts NADP(+). Positions 184 to 329 (TFEAETVTDL…EKLRDLMSWV (146 aa)) constitute a KARI C-terminal knotted domain. Positions 192, 196, 228, and 232 each coordinate Mg(2+). Ser253 is a substrate binding site.

The protein belongs to the ketol-acid reductoisomerase family. The cofactor is Mg(2+).

It catalyses the reaction (2R)-2,3-dihydroxy-3-methylbutanoate + NADP(+) = (2S)-2-acetolactate + NADPH + H(+). The enzyme catalyses (2R,3R)-2,3-dihydroxy-3-methylpentanoate + NADP(+) = (S)-2-ethyl-2-hydroxy-3-oxobutanoate + NADPH + H(+). The protein operates within amino-acid biosynthesis; L-isoleucine biosynthesis; L-isoleucine from 2-oxobutanoate: step 2/4. It functions in the pathway amino-acid biosynthesis; L-valine biosynthesis; L-valine from pyruvate: step 2/4. Involved in the biosynthesis of branched-chain amino acids (BCAA). Catalyzes an alkyl-migration followed by a ketol-acid reduction of (S)-2-acetolactate (S2AL) to yield (R)-2,3-dihydroxy-isovalerate. In the isomerase reaction, S2AL is rearranged via a Mg-dependent methyl migration to produce 3-hydroxy-3-methyl-2-ketobutyrate (HMKB). In the reductase reaction, this 2-ketoacid undergoes a metal-dependent reduction by NADPH to yield (R)-2,3-dihydroxy-isovalerate. In Corynebacterium urealyticum (strain ATCC 43042 / DSM 7109), this protein is Ketol-acid reductoisomerase (NADP(+)).